Consider the following 362-residue polypeptide: Alanine racemase (362 aa).

The Proton acceptor; specific for D-alanine role is filled by K35. K35 is modified (N6-(pyridoxal phosphate)lysine). R130 is a binding site for substrate. Y257 acts as the Proton acceptor; specific for L-alanine in catalysis. M305 lines the substrate pocket.

Belongs to the alanine racemase family. Pyridoxal 5'-phosphate serves as cofactor.

It carries out the reaction L-alanine = D-alanine. Its pathway is amino-acid biosynthesis; D-alanine biosynthesis; D-alanine from L-alanine: step 1/1. Its function is as follows. Catalyzes the interconversion of L-alanine and D-alanine. May also act on other amino acids. The chain is Alanine racemase (alr) from Nitrosomonas europaea (strain ATCC 19718 / CIP 103999 / KCTC 2705 / NBRC 14298).